The following is a 334-amino-acid chain: Hemin transport system permease protein HmuU (334 aa).

Helical transmembrane passes span 9–29 (LMLGFLLILLVILALGSANMG), 60–80 (LLAVVVGCALAVSGTIMQGLF), 96–116 (AALCVGLIIVMPFSLPPLLAL), 117–137 (YSHMVGAFIGSLAISTIIFTL), 149–169 (LLAGIAINALCGAAVGVLTYI), 191–211 (WSTLLVASSLILPTCILGLLQ), 244–264 (AILIGAAVAVSGVIGFIGLVV), 278–298 (WLLPGAALGGACLLLTADTLA), and 306–326 (EMPVGLLTSLLGGPYFLWLIL).

The protein belongs to the binding-protein-dependent transport system permease family. FecCD subfamily.

The protein resides in the cell inner membrane. Its function is as follows. Part of the binding-protein-dependent transport system for hemin; probably responsible for the translocation of the substrate across the membrane. In Yersinia pestis, this protein is Hemin transport system permease protein HmuU (hmuU).